The chain runs to 496 residues: Lysine--tRNA ligase (496 aa).

The Mg(2+) site is built by E409 and E416.

It belongs to the class-II aminoacyl-tRNA synthetase family. As to quaternary structure, homodimer. Requires Mg(2+) as cofactor.

Its subcellular location is the cytoplasm. It catalyses the reaction tRNA(Lys) + L-lysine + ATP = L-lysyl-tRNA(Lys) + AMP + diphosphate. This chain is Lysine--tRNA ligase, found in Streptococcus suis (strain 05ZYH33).